The sequence spans 155 residues: Transcriptional repressor NrdR (155 aa).

Residues 3-34 (CPFCGNIDTQVKDSRPAEDHVSIRRRRFCPAC) fold into a zinc finger. The 91-residue stretch at 49–139 (LVVIKSTGKR…VYKNFQAADD (91 aa)) folds into the ATP-cone domain.

Belongs to the NrdR family. Requires Zn(2+) as cofactor.

Its function is as follows. Negatively regulates transcription of bacterial ribonucleotide reductase nrd genes and operons by binding to NrdR-boxes. The protein is Transcriptional repressor NrdR of Roseobacter denitrificans (strain ATCC 33942 / OCh 114) (Erythrobacter sp. (strain OCh 114)).